We begin with the raw amino-acid sequence, 273 residues long: Major prion protein homolog (273 aa).

Residues 1–24 (MARLLTTCCLLALLLAACTDVALS) form the signal peptide. The segment at 25 to 121 (KKGKGKPSGG…QKPWKPPKTN (97 aa)) is disordered. 8 consecutive repeat copies span residues 42 to 47 (RQPSYP), 48 to 53 (RQPGYP), 54 to 59 (HNPGYP), 60 to 65 (HNPGYP), 66 to 71 (HNPGYP), 72 to 77 (HNPGYP), 78 to 83 (HNPGYP), and 84 to 89 (QNPGYP). The interval 42–89 (RQPSYPRQPGYPHNPGYPHNPGYPHNPGYPHNPGYPHNPGYPQNPGYP) is 8 X 6 AA tandem repeats of [HR]-[NQ]-P-G-Y-P. The span at 51-94 (GYPHNPGYPHNPGYPHNPGYPHNPGYPHNPGYPQNPGYPHNPGY) shows a compositional bias: low complexity. Positions 66, 72, and 78 each coordinate Cu(2+). Residues histidine 90 and glycine 93 each coordinate Cu(2+). Residues 101-111 (YNPSSGGSYHN) show a composition bias toward polar residues. A disulfide bridge links cysteine 192 with cysteine 237. N-linked (GlcNAc...) asparagine glycosylation is found at asparagine 194, asparagine 209, and asparagine 218. A lipid anchor (GPI-anchor amidated serine) is attached at serine 248. A propeptide spans 249 to 273 (GIQLHPADTWLAVLLLLLTTLFAMH) (removed in mature form).

This sequence belongs to the prion family. Monomer and homodimer. Has a tendency to aggregate into amyloid fibrils containing a cross-beta spine, formed by a steric zipper of superposed beta-strands. Soluble oligomers may represent an intermediate stage on the path to fibril formation. Copper binding may promote oligomerization. As to expression, spinal cord and brain.

The protein resides in the cell membrane. In terms of biological role, its primary physiological function is unclear. Has cytoprotective activity against internal or environmental stresses. May play a role in neuronal development and synaptic plasticity. May be required for neuronal myelin sheath maintenance. May play a role in iron uptake and iron homeostasis. Soluble oligomers are toxic to cultured neuroblastoma cells and induce apoptosis (in vitro). Association with GPC1 (via its heparan sulfate chains) targets PRNP to lipid rafts. Also provides Cu(2+) or Zn(2+) for the ascorbate-mediated GPC1 deaminase degradation of its heparan sulfate side chains. This chain is Major prion protein homolog (PRNP), found in Gallus gallus (Chicken).